Consider the following 700-residue polypeptide: Putative cysteine-rich receptor-like protein kinase 30 (700 aa).

Positions 1-24 (MRQNNLFSLIFWLVPVSLIIVVSA) are cleaved as a signal peptide. 2 consecutive Gnk2-homologous domains span residues 25-129 (QLCS…NQPS) and 135-250 (LESV…LYPF). Residues 25 to 285 (QLCSEKFGTF…KDEKTIHTGT (261 aa)) lie on the Extracellular side of the membrane. 5 N-linked (GlcNAc...) asparagine glycosylation sites follow: asparagine 63, asparagine 105, asparagine 146, asparagine 150, and asparagine 191. A helical transmembrane segment spans residues 286–306 (IIGIVIVVAMVIIMALLALGV). The Cytoplasmic segment spans residues 307–700 (SVCRSRKKYQ…SKSMYRNTED (394 aa)). In terms of domain architecture, Protein kinase spans 346-626 (FLASNKIGQG…IFQMLTNSSI (281 aa)). ATP is bound by residues 352-360 (IGQGGFGEV) and lysine 374. The Proton acceptor role is filled by aspartate 474. Serine 478 carries the phosphoserine modification. Threonine 514 is modified (phosphothreonine). Tyrosine 522 bears the Phosphotyrosine mark.

Belongs to the protein kinase superfamily. Ser/Thr protein kinase family. CRK subfamily.

Its subcellular location is the membrane. The catalysed reaction is L-seryl-[protein] + ATP = O-phospho-L-seryl-[protein] + ADP + H(+). The enzyme catalyses L-threonyl-[protein] + ATP = O-phospho-L-threonyl-[protein] + ADP + H(+). The chain is Putative cysteine-rich receptor-like protein kinase 30 (CRK30) from Arabidopsis thaliana (Mouse-ear cress).